We begin with the raw amino-acid sequence, 160 residues long: 17.9 kDa class II heat shock protein (160 aa).

Residues 44-160 enclose the sHSP domain; it reads DARAMAATPA…KPKTIQVQVA (117 aa).

The protein belongs to the small heat shock protein (HSP20) family.

It localises to the cytoplasm. The chain is 17.9 kDa class II heat shock protein (HSP17.9) from Helianthus annuus (Common sunflower).